The primary structure comprises 880 residues: Alanine--tRNA ligase (880 aa).

Positions 567, 571, 669, and 673 each coordinate Zn(2+).

This sequence belongs to the class-II aminoacyl-tRNA synthetase family. Zn(2+) serves as cofactor.

It is found in the cytoplasm. It carries out the reaction tRNA(Ala) + L-alanine + ATP = L-alanyl-tRNA(Ala) + AMP + diphosphate. In terms of biological role, catalyzes the attachment of alanine to tRNA(Ala) in a two-step reaction: alanine is first activated by ATP to form Ala-AMP and then transferred to the acceptor end of tRNA(Ala). Also edits incorrectly charged Ser-tRNA(Ala) and Gly-tRNA(Ala) via its editing domain. The protein is Alanine--tRNA ligase of Bacillus mycoides (strain KBAB4) (Bacillus weihenstephanensis).